Here is a 247-residue protein sequence, read N- to C-terminus: DNA polymerase sliding clamp (247 aa).

It belongs to the PCNA family. In terms of assembly, homotrimer. The subunits circularize to form a toroid; DNA passes through its center. Replication factor C (RFC) is required to load the toroid on the DNA.

Its function is as follows. Sliding clamp subunit that acts as a moving platform for DNA processing. Responsible for tethering the catalytic subunit of DNA polymerase and other proteins to DNA during high-speed replication. This Haloarcula marismortui (strain ATCC 43049 / DSM 3752 / JCM 8966 / VKM B-1809) (Halobacterium marismortui) protein is DNA polymerase sliding clamp.